The following is a 434-amino-acid chain: Rubisco accumulation factor 1.1, chloroplastic (434 aa).

Residues 1-51 (MLSLTATTLSSSIFTQSKTHGFFNTRPVYRKPFTTITSALIPASNRQAPPK) constitute a chloroplast transit peptide. The segment at 65-254 (IPPKFRSLDT…KAKKAVLREL (190 aa)) is N-terminal alpha-helix. Residues 273–419 (VPVVRLRFGE…GMVVLVVRPP (147 aa)) form a C-terminal beta sheet region.

This sequence belongs to the RAF family. As to quaternary structure, homodimer.

It is found in the plastid. The protein resides in the chloroplast. In terms of biological role, required for assembly or stability of RuBisCO. Acts at a postchaperonin step to fold and/or assemble the large subunit (rbcL) into RuBisCO. RAF1 binds first to a rbcL dimer (rbcL(2)), leading to a rbcL(8)-RAF1(4) complex formation. In the next step, RBCS displaces RAF1, thus resulting in holoenzyme formation. This Arabidopsis thaliana (Mouse-ear cress) protein is Rubisco accumulation factor 1.1, chloroplastic.